The chain runs to 60 residues: Protein translocase subunit SecE (60 aa).

A helical transmembrane segment spans residues 31–51 (VIVVSTVIFFLVFFYALDLGI).

This sequence belongs to the SecE/SEC61-gamma family. As to quaternary structure, component of the Sec protein translocase complex. Heterotrimer consisting of SecY, SecE and SecG subunits. The heterotrimers can form oligomers, although 1 heterotrimer is thought to be able to translocate proteins. Interacts with the ribosome. Interacts with SecDF, and other proteins may be involved. Interacts with SecA.

It localises to the cell membrane. In terms of biological role, essential subunit of the Sec protein translocation channel SecYEG. Clamps together the 2 halves of SecY. May contact the channel plug during translocation. In Staphylococcus aureus (strain Mu50 / ATCC 700699), this protein is Protein translocase subunit SecE.